We begin with the raw amino-acid sequence, 640 residues long: Threonine--tRNA ligase (640 aa).

Positions 1–61 (MVKITYPDNS…MQDSTIKLIT (61 aa)) constitute a TGS domain. Residues 242–533 (DHRKLGPKLN…LIENFAGEFP (292 aa)) are catalytic. The Zn(2+) site is built by cysteine 334, histidine 385, and histidine 510.

Belongs to the class-II aminoacyl-tRNA synthetase family. As to quaternary structure, homodimer. The cofactor is Zn(2+).

It is found in the cytoplasm. It carries out the reaction tRNA(Thr) + L-threonine + ATP = L-threonyl-tRNA(Thr) + AMP + diphosphate + H(+). In terms of biological role, catalyzes the attachment of threonine to tRNA(Thr) in a two-step reaction: L-threonine is first activated by ATP to form Thr-AMP and then transferred to the acceptor end of tRNA(Thr). Also edits incorrectly charged L-seryl-tRNA(Thr). This chain is Threonine--tRNA ligase, found in Petrotoga mobilis (strain DSM 10674 / SJ95).